The chain runs to 624 residues: Exocyst complex component EXO70B1 (624 aa).

Residues 148–176 (FGLNPQGDAGAMNHRFDSEEEEDDDRDFN) form a disordered region.

The protein belongs to the EXO70 family. In terms of assembly, interacts with EXO70B2, SEC5A and EXO84B. Binds to PUB18. Binds directly to B1L at the plasma membrane and in small vesicles. Target of the E3 ubiquitin-protein ligase PUB18 that mediates its ubiquitination and degradation via the 26S proteasome.

The protein resides in the cytoplasmic vesicle. The protein localises to the phagosome. It localises to the endomembrane system. Its subcellular location is the cell membrane. It is found in the vesicle. Component of an exocyst subcomplex specifically involved in autophagy-related, Golgi-independent membrane traffic to the vacuole. Regulates autophagosome formation and autophagy-related Golgi-independent import into the vacuole. Positive regulator of both abscisic acid (ABA)-promoted and mannitol (drought)-promoted stomatal closure. Involved in the regulation of lateral root formation. The protein is Exocyst complex component EXO70B1 of Arabidopsis thaliana (Mouse-ear cress).